Reading from the N-terminus, the 77-residue chain is Conotoxin ArMKLT2-0322 (77 aa).

An N-terminal signal peptide occupies residues 1-22 (MKLTCVLIIAVLFLIVCQLNTA). Residues 23 to 47 (DDSRDKQEYRAVRLRDAIRNSRGSR) constitute a propeptide that is removed on maturation. Intrachain disulfides connect Cys49-Cys62, Cys56-Cys67, and Cys61-Cys74.

The protein belongs to the conotoxin O1 superfamily. Expressed by the venom duct.

It is found in the secreted. This Conus arenatus (Sand-dusted cone) protein is Conotoxin ArMKLT2-0322.